Consider the following 183-residue polypeptide: Acireductone dioxygenase (183 aa).

Fe(2+) contacts are provided by histidine 95, histidine 97, glutamate 101, and histidine 139. Residues histidine 95, histidine 97, glutamate 101, and histidine 139 each coordinate Ni(2+).

Belongs to the acireductone dioxygenase (ARD) family. In terms of assembly, monomer. It depends on Fe(2+) as a cofactor. Ni(2+) is required as a cofactor.

It catalyses the reaction 1,2-dihydroxy-5-(methylsulfanyl)pent-1-en-3-one + O2 = 3-(methylsulfanyl)propanoate + CO + formate + 2 H(+). The catalysed reaction is 1,2-dihydroxy-5-(methylsulfanyl)pent-1-en-3-one + O2 = 4-methylsulfanyl-2-oxobutanoate + formate + 2 H(+). The protein operates within amino-acid biosynthesis; L-methionine biosynthesis via salvage pathway; L-methionine from S-methyl-5-thio-alpha-D-ribose 1-phosphate: step 5/6. In terms of biological role, catalyzes 2 different reactions between oxygen and the acireductone 1,2-dihydroxy-3-keto-5-methylthiopentene (DHK-MTPene) depending upon the metal bound in the active site. Fe-containing acireductone dioxygenase (Fe-ARD) produces formate and 2-keto-4-methylthiobutyrate (KMTB), the alpha-ketoacid precursor of methionine in the methionine recycle pathway. Ni-containing acireductone dioxygenase (Ni-ARD) produces methylthiopropionate, carbon monoxide and formate, and does not lie on the methionine recycle pathway. The protein is Acireductone dioxygenase of Aquifex aeolicus (strain VF5).